The following is a 422-amino-acid chain: MTGYTLTCPVCNKEFSDSYTLTCPGGCQGLIRAKYAARQITLHDAPGVFKYMDWLPVTGVLRTRAEPVCFKSEGLARALGLSDLWIVFSGYWPEVGAFAVSGSFKEFEAFPTMQRLSERTKGIIQVSSAGNTGRAFAEVSAETCQPVIIVVPESARDRLFTTSPAHDTLLITISGDYTDAINLGSRICTLPGIFPEGGAKNVARRDGMGTVMLAGTLAMGTLPDWYLQAVGSGTGGIAAYEASLRLIADGRFGTRMPRLLLFQNEPFIPMVRAWQEKRREIKDEDMPDAEQAISQVYSDVLTNRTPPYGIVGGVFDTLIATNGLMAGVSSADAQEAGKLFSSSEGIDPDPAAAVCVAGLMRAVRSGVIKPDEKILLNITGGGYARGRKDLPRFVKAPDIMVSKETPFEKISAKVQEWMRYYA.

At lysine 105 the chain carries N6-(pyridoxal phosphate)lysine. 2 residues coordinate pyridoxal 5'-phosphate: asparagine 131 and threonine 379.

This sequence belongs to the threonine synthase family. Cysteate synthase subfamily. In terms of assembly, homotrimer. The cofactor is pyridoxal 5'-phosphate.

The enzyme catalyses O-phospho-L-serine + sulfite + H(+) = L-cysteate + phosphate. It functions in the pathway cofactor biosynthesis; coenzyme M biosynthesis. Its function is as follows. Specifically catalyzes the beta-elimination of phosphate from L-phosphoserine and the beta-addition of sulfite to the dehydroalanine intermediate to produce L-cysteate. This is Cysteate synthase from Methanospirillum hungatei JF-1 (strain ATCC 27890 / DSM 864 / NBRC 100397 / JF-1).